We begin with the raw amino-acid sequence, 461 residues long: Phosphatidate cytidylyltransferase 1 (461 aa).

A disordered region spans residues 1–68 (MLELRHRGGC…PEVPPSSDRT (68 aa)). At arginine 7 the chain carries Omega-N-methylarginine. Positions 22–56 (REGEAAGGDHETESTSDKETDIDDRYGDLDARGDS) are enriched in basic and acidic residues. Residues serine 35 and serine 37 each carry the phosphoserine modification. Helical transmembrane passes span 96–116 (MISL…LLVL), 149–169 (FLLC…FATF), 183–203 (HRFI…LSLV), 230–250 (LVIQ…SSVI), 279–299 (GFIG…YVLS), and 357–377 (IALS…ASGF).

This sequence belongs to the CDS family. Homodimer. Interacts with FOS; this interaction may enhance catalytic activity. It depends on Mg(2+) as a cofactor. Expressed in adult brain, eye, smooth muscle and testis. Highly expressed in the inner segment of the photoreceptor layer of adult retina.

It is found in the endoplasmic reticulum membrane. It carries out the reaction a 1,2-diacyl-sn-glycero-3-phosphate + CTP + H(+) = a CDP-1,2-diacyl-sn-glycerol + diphosphate. The enzyme catalyses 1-octadecanoyl-2-(5Z,8Z,11Z,14Z-eicosatetraenoyl)-sn-glycero-3-phosphate + CTP + H(+) = 1-octadecanoyl-2-(5Z,8Z,11Z,14Z-eicosatetraenoyl)-sn-glycero-3-cytidine-5'-diphosphate + diphosphate. The catalysed reaction is 1-octadecanoyl-2-(9Z,12Z-octadecadienoyl)-sn-glycero-3-phosphate + CTP + H(+) = 1-octadecanoyl-2-(9Z,12Z-octadecadienoyl)-sn-glycero-3-cytidine-5'-diphosphate + diphosphate. It catalyses the reaction 1-hexadecanoyl-2-(5Z,8Z,11Z,14Z-eicosatetraenoyl)-sn-glycero-3-phosphate + CTP + H(+) = 1-hexadecanoyl-2-(5Z,8Z,11Z,14Z-eicosatetraenoyl)-sn-glycero-3-cytidine-5'-diphosphate + diphosphate. It carries out the reaction 1,2-di-(5Z,8Z,11Z,14Z)-eicosatetraenoyl-sn-glycero-3-phosphate + CTP + H(+) = 1,2-di-(5Z,8Z,11Z,14Z-eicosatetraenoyl)-sn-glycero-3-cytidine-5'-diphosphate + diphosphate. The enzyme catalyses 1-octadecanoyl-2-(9Z-octadecenoyl)-sn-glycero-3-phosphate + CTP + H(+) = 1-octadecanoyl-2-(9Z-octadecenoyl)-sn-glycero-3-cytidine-5'-diphosphate + diphosphate. The catalysed reaction is 1-octadecanoyl-2-(4Z,7Z,10Z,13Z,16Z,19Z-docosahexaenoyl)-sn-glycero-3-phosphate + CTP + H(+) = 1-octadecanoyl-2-(4Z,7Z,10Z,13Z,16Z,19Z-docosahexaenoyl)-sn-glycero-3-cytidine-5'-diphosphate + diphosphate. It catalyses the reaction 1,2-di-(9Z,12Z-octadecadienoyl)-sn-glycero-3-phosphate + CTP + H(+) = 1,2-di-(9Z,12Z-octadecadienoyl)-sn-glycero-3-cytidine-5'-diphosphate + diphosphate. It carries out the reaction 1,2-di-(9Z-octadecenoyl)-sn-glycero-3-phosphate + CTP + H(+) = 1,2-di-(9Z-octadecenoyl)-sn-glycero-3-cytidine-5'-diphosphate + diphosphate. It functions in the pathway phospholipid metabolism; CDP-diacylglycerol biosynthesis; CDP-diacylglycerol from sn-glycerol 3-phosphate: step 3/3. In terms of biological role, catalyzes the conversion of phosphatidic acid (PA) to CDP-diacylglycerol (CDP-DAG), an essential intermediate in the synthesis of phosphatidylglycerol, cardiolipin and phosphatidylinositol. Exhibits almost no acyl chain preference for PA, showing no discrimination for the sn-1/sn-2 acyl chain composition of PAs. Plays an important role in regulating the growth of lipid droplets which are storage organelles at the center of lipid and energy homeostasis. Positively regulates the differentiation and development of adipocytes. The sequence is that of Phosphatidate cytidylyltransferase 1 from Mus musculus (Mouse).